We begin with the raw amino-acid sequence, 906 residues long: Cadherin-2 (906 aa).

The N-terminal stretch at 1-25 is a signal peptide; that stretch reads MCRIAGGPRTLLPLLAALLQASLEA. Residues 26-159 constitute a propeptide that is removed on maturation; that stretch reads SGELALCKTG…HSGALQRQKR (134 aa). Ser-96 carries the phosphoserine modification. Cadherin domains lie at 160 to 267, 268 to 382, 383 to 497, 498 to 603, and 604 to 717; these read DWVI…RPEF, LHQV…PPEF, TAMT…NPYF, APNP…DNAP, and QVLP…RIVG. Over 160–724 the chain is Extracellular; sequence DWVIPPINLP…IVGAGLGTGT (565 aa). Glu-170 serves as a coordination point for Ca(2+). N-linked (GlcNAc...) asparagine glycosylation occurs at Asn-190. Ca(2+) contacts are provided by Asp-226, Glu-228, Asp-259, Met-260, Asn-261, Asp-262, and Asn-263. Asn-273 carries an N-linked (GlcNAc...) asparagine glycan. Positions 293, 295, and 301 each coordinate Ca(2+). Asn-325 is a glycosylation site (N-linked (GlcNAc...) asparagine). Asp-353 provides a ligand contact to Ca(2+). Asn-402, Asn-572, Asn-622, Asn-651, and Asn-692 each carry an N-linked (GlcNAc...) asparagine glycan. A helical membrane pass occupies residues 725-745; it reads IIAILLCIIILLILVLMFVVW. The Cytoplasmic segment spans residues 746-906; sequence MKRRDKERQA…LADMYGGGDD (161 aa). Residues 863-880 are compositionally biased toward low complexity; that stretch reads SGSTAGSLSSLNSSSSGG. Residues 863 to 883 are disordered; that stretch reads SGSTAGSLSSLNSSSSGGDQD.

As to quaternary structure, homodimer (via extracellular region). Can also form heterodimers with other cadherins (via extracellular region). Dimerization occurs in trans, i.e. with a cadherin chain from another cell. Interacts with PCDH8; this complex may also include TAOK2. The interaction with PCDH8 may lead to internalization through TAOK2/p38 MAPK pathway. Identified in a complex containing FGFR4, NCAM1, CDH2, PLCG1, FRS2, SRC, SHC1, GAP43 and CTTN. May interact with OBSCN (via protein kinase domain 2). Interacts with FBXO45. Cleaved by MMP24. Ectodomain cleavage leads to the generation of a soluble 90 kDa N-terminal soluble fragment and a 45 kDa membrane-bound C-terminal fragment 1 (CTF1), which is further cleaved by gamma-secretase into a 35 kDa. Cleavage in neural stem cells by MMP24 affects CDH2-mediated anchorage of neural stem cells to ependymocytes in the adult subependymal zone, leading to modulate neural stem cell quiescence. Post-translationally, may be phosphorylated by OBSCN. As to expression, in testis, expressed in Sertoli and germ cells.

The protein localises to the cell membrane. It is found in the sarcolemma. It localises to the cell junction. Its subcellular location is the cell surface. The protein resides in the desmosome. The protein localises to the adherens junction. Its function is as follows. Calcium-dependent cell adhesion protein; preferentially mediates homotypic cell-cell adhesion by dimerization with a CDH2 chain from another cell. Cadherins may thus contribute to the sorting of heterogeneous cell types. Acts as a regulator of neural stem cells quiescence by mediating anchorage of neural stem cells to ependymocytes in the adult subependymal zone: upon cleavage by MMP24, CDH2-mediated anchorage is affected, leading to modulate neural stem cell quiescence. Plays a role in cell-to-cell junction formation between pancreatic beta cells and neural crest stem (NCS) cells, promoting the formation of processes by NCS cells. Required for proper neurite branching. Required for pre- and postsynaptic organization. CDH2 may be involved in neuronal recognition mechanism. In hippocampal neurons, may regulate dendritic spine density. This chain is Cadherin-2 (Cdh2), found in Rattus norvegicus (Rat).